A 284-amino-acid chain; its full sequence is 2,3,4,5-tetrahydropyridine-2,6-dicarboxylate N-succinyltransferase (284 aa).

Substrate is bound by residues Arg-111 and Asp-148.

It belongs to the transferase hexapeptide repeat family. Homotrimer.

It is found in the cytoplasm. The catalysed reaction is (S)-2,3,4,5-tetrahydrodipicolinate + succinyl-CoA + H2O = (S)-2-succinylamino-6-oxoheptanedioate + CoA. It participates in amino-acid biosynthesis; L-lysine biosynthesis via DAP pathway; LL-2,6-diaminopimelate from (S)-tetrahydrodipicolinate (succinylase route): step 1/3. This is 2,3,4,5-tetrahydropyridine-2,6-dicarboxylate N-succinyltransferase from Brucella suis (strain ATCC 23445 / NCTC 10510).